Reading from the N-terminus, the 298-residue chain is Dioxygenase aneA (298 aa).

The Fe cation site is built by H134, D136, and H213.

This sequence belongs to the PhyH family. As to quaternary structure, homodimer. Fe cation serves as cofactor.

It catalyses the reaction aculene D + 2-oxoglutarate + O2 = aculene C + succinate + CO2 + H2O. The enzyme catalyses aculene B + 2-oxoglutarate + O2 = aculene A + succinate + CO2 + H2O. The protein operates within secondary metabolite biosynthesis. Dioxygenase; part of the gene cluster that mediates the biosynthesis of aculenes, a unique type of norsesquiterpenes that contain a nordaucane skeleton linked to an L-proline moiety and are of mixed biosynthetic origin. The pathway begins with the synthesis of dauca-4,7-diene by the terpene cyclase aneC using farnesyl pyrophosphate (FPP) as substrate. The cytochrome P450 monooxygenase aneF then performs the initial oxidation at C-12 of dauca-4,7-diene to yield asperaculane D. Asperaculane D is substrate of the cytochrome P450 monooxygenase aneD for C-10 hydroxylation to yield asperaculane E. The cytochrome P450 monooxygenase aneG then converts asperaculane E into aculene D via C-2 oxidation. The monomodular nonribosomal peptide synthase aneB adenylates L-proline and the thiohydrolase aneE transfers this activated L-proline derivative to aculenes D and C to produce respectively aculenes B and A. The dioxygenase aneA converts aculene D into aculene C, and aculene B into aculene A by introducing the 5,6-alkene moiety. Asperculanes A, B, C and F, as well as 14-prolyl asperculane C, might be shunt products of the pathway. The polypeptide is Dioxygenase aneA (Aspergillus aculeatus (strain ATCC 16872 / CBS 172.66 / WB 5094)).